We begin with the raw amino-acid sequence, 255 residues long: Defective in cullin neddylation protein 1 (255 aa).

The UBA-like domain maps to 6 to 43 (QRELIREFLAVTSATSAAAETYLERNHWSLDHALDDFY). Residues 54-250 (QYSAELVATF…VIDEYYEWVK (197 aa)) form the DCUN1 domain.

May contribute to neddylation of cullin components of SCF-type E3 ubiquitin ligase complexes. Neddylation of cullins play an essential role in the regulation of SCF-type complexes activity. The polypeptide is Defective in cullin neddylation protein 1 (DCN1) (Eremothecium gossypii (strain ATCC 10895 / CBS 109.51 / FGSC 9923 / NRRL Y-1056) (Yeast)).